We begin with the raw amino-acid sequence, 214 residues long: Ubiquitin-conjugating enzyme E2 21 (214 aa).

Residues 21 to 168 (ARVTRKCKEV…AVYWTSYFAN (148 aa)) form the UBC core domain. Residue Cys-106 is the Glycyl thioester intermediate of the active site. The UBA domain occupies 172–214 (DVEPDFNRKVGRLIEMGIRETEAIVYLSCNNWKLEQALQFIFD).

Belongs to the ubiquitin-conjugating enzyme family.

The enzyme catalyses S-ubiquitinyl-[E1 ubiquitin-activating enzyme]-L-cysteine + [E2 ubiquitin-conjugating enzyme]-L-cysteine = [E1 ubiquitin-activating enzyme]-L-cysteine + S-ubiquitinyl-[E2 ubiquitin-conjugating enzyme]-L-cysteine.. It functions in the pathway protein modification; protein ubiquitination. In terms of biological role, acts with E3 ubiquitin-protein ligase trim-21 to catalyze the 'Lys-48'-linked polyubiquitination of ced-1, promoting its proteasomal degradation to maintain appropriate ced-1 levels for apoptotic cell clearance. The polypeptide is Ubiquitin-conjugating enzyme E2 21 (ubc-21) (Caenorhabditis elegans).